The following is a 311-amino-acid chain: Dihydroorotate dehydrogenase A (fumarate) (311 aa).

FMN is bound by residues serine 19 and lysine 43 to serine 44. Residues lysine 43, asparagine 67 to leucine 71, and asparagine 127 contribute to the substrate site. Position 127 (asparagine 127) interacts with FMN. Residue cysteine 130 is the Nucleophile of the active site. FMN contacts are provided by lysine 164 and valine 192. Asparagine 193–serine 194 serves as a coordination point for substrate. FMN-binding positions include glycine 221, glycine 249 to glycine 250, and glycine 271 to threonine 272.

Belongs to the dihydroorotate dehydrogenase family. Type 1 subfamily. Homodimer. Requires FMN as cofactor.

It is found in the cytoplasm. It catalyses the reaction (S)-dihydroorotate + fumarate = orotate + succinate. Its pathway is pyrimidine metabolism; UMP biosynthesis via de novo pathway. In terms of biological role, catalyzes the conversion of dihydroorotate to orotate with fumarate as the electron acceptor. The protein is Dihydroorotate dehydrogenase A (fumarate) (pyrDA) of Lactococcus lactis subsp. cremoris (Streptococcus cremoris).